We begin with the raw amino-acid sequence, 455 residues long: Gastric inhibitory polypeptide receptor (455 aa).

Residues 1–18 (MPLRLLLLLLWLWGLSLQ) form the signal peptide. Residues 19–135 (RAETDSEGQT…DQKLILERLQ (117 aa)) are Extracellular-facing. 3 disulfide bridges follow: C43–C67, C58–C100, and C81–C115. Residues N59, N69, and N74 are each glycosylated (N-linked (GlcNAc...) asparagine). A helical transmembrane segment spans residues 136–158 (VVYTVGYSLSLATLLLALLILSL). Residues 159-166 (FRRLHCTR) lie on the Cytoplasmic side of the membrane. The helical transmembrane segment at 167 to 186 (NYIHMNLFTSFMLRAGAILT) threads the bilayer. The Extracellular segment spans residues 187 to 214 (RDQLLPPLGPYTGNQTPTLWNQALAACR). A helical membrane pass occupies residues 215-239 (TAQILTQYCVGANYTWLLVEGVYLH). At 240–251 (HLLVVVRRSEKG) the chain is on the cytoplasmic side. A helical membrane pass occupies residues 252-275 (HFRCYLLLGWGAPALFVIPWVIVR). The Extracellular segment spans residues 276–290 (YLYENTQCWERNEVK). Residues 291–316 (AIWWIIRTPILITILINFLIFIRILG) form a helical membrane-spanning segment. The Cytoplasmic portion of the chain corresponds to 317–338 (ILVSKLRTRQMRCPDYRLRLAR). Residues 339-359 (STLTLMPLLGVHEVVFAPVTE) form a helical membrane-spanning segment. The Extracellular portion of the chain corresponds to 360-374 (EQAEGSLRFAKLAFE). The chain crosses the membrane as a helical span at residues 375–395 (IFLSSFQGFLVSVLYCFINKE). The Cytoplasmic portion of the chain corresponds to 396–455 (VQSEIRRLRLSLQEQCPRPHLGQAPRAVPLSSAPQEAAIRNALPSGMLHVPGDEVLESYC).

It belongs to the G-protein coupled receptor 2 family. In terms of assembly, may form homodimers and heterodimers with GLP1R. N-glycosylation is required for cell surface expression and lengthens receptor half-life by preventing degradation in the ER. In terms of tissue distribution, present in the pancreas as well as the gut, adipose tissue, heart, pituitary, and inner layers of the adrenal cortex, whereas it is not found in kidney, spleen, or liver. It is also expressed in several brain regions, including the cerebral cortex, hippocampus, and olfactory bulb.

It is found in the cell membrane. Functionally, this is a receptor for GIP. The activity of this receptor is mediated by G proteins which activate adenylyl cyclase. This chain is Gastric inhibitory polypeptide receptor (Gipr), found in Rattus norvegicus (Rat).